The chain runs to 228 residues: Prolactin (228 aa).

Residues 1-29 form the signal peptide; that stretch reads MCTKRSSLKGSLLLLLLISSLLLSRSVDS. A disulfide bridge connects residues Cys-33 and Cys-40. Phosphoserine is present on residues Ser-55, Ser-63, and Ser-119. 2 cysteine pairs are disulfide-bonded: Cys-87–Cys-203 and Cys-220–Cys-228.

It belongs to the somatotropin/prolactin family. Interacts with PRLR.

Its subcellular location is the secreted. In terms of biological role, prolactin acts primarily on the mammary gland by promoting lactation. The protein is Prolactin (PRL) of Isoodon macrourus (Short-nosed bandicoot).